A 261-amino-acid polypeptide reads, in one-letter code: Zinc import ATP-binding protein ZnuC (261 aa).

An ABC transporter domain is found at 6-221 (IRLEQVGVTF…PAFVELFGKN (216 aa)). Position 38–45 (38–45 (GPNGAGKT)) interacts with ATP.

It belongs to the ABC transporter superfamily. Zinc importer (TC 3.A.1.15.5) family. As to quaternary structure, the complex is composed of two ATP-binding proteins (ZnuC), two transmembrane proteins (ZnuB) and a solute-binding protein (ZnuA).

Its subcellular location is the cell inner membrane. The catalysed reaction is Zn(2+)(out) + ATP(in) + H2O(in) = Zn(2+)(in) + ADP(in) + phosphate(in) + H(+)(in). Its function is as follows. Part of the ABC transporter complex ZnuABC involved in zinc import. Responsible for energy coupling to the transport system. The chain is Zinc import ATP-binding protein ZnuC from Pseudomonas fluorescens (strain ATCC BAA-477 / NRRL B-23932 / Pf-5).